We begin with the raw amino-acid sequence, 477 residues long: M-phase inducer phosphatase 3 (477 aa).

Residues 1 to 20 (MSAEFFSSKREEGSLASGPS) are disordered. S2 carries the N-acetylserine modification. Residues S20 and S38 each carry the phosphoserine modification. Residue T48 is modified to Phosphothreonine; by CDK1. 3 positions are modified to phosphoserine: S58, S62, and S65. Phosphothreonine; by CDK1 is present on T68. Residue S123 is modified to Phosphoserine; by CDK1. S130 bears the Phosphoserine mark. T131 carries the phosphothreonine modification. The residue at position 169 (S169) is a Phosphoserine; by CDK1. Phosphoserine; by PLK3 is present on residues S192 and S199. S218 carries the post-translational modification Phosphoserine; by CDK1. S220 is subject to Phosphoserine; by CHEK1, CHEK2, BRSK1, MAPK14 AND MARK3. In terms of domain architecture, Rhodanese spans 325-432 (LIEKFYIIDC…FFPEYMELCE (108 aa)). The active site involves C381. Phosphoserine is present on S476.

This sequence belongs to the MPI phosphatase family. As to quaternary structure, interacts with MAPK14 and 14-3-3 proteins. When phosphorylated on Ser-130 and/or Thr-131, interacts with PLK1. Interacts with MARK3/C-TAK1. Post-translationally, phosphorylated by CHEK1 and MAPK14 at Ser-220. This phosphorylation creates a binding site for 14-3-3 protein and inhibits the phosphatase. Phosphorylated by PLK4. Phosphorylated by PLK1, leading to activate the phosphatase activity. Phosphorylation by PLK3 at Ser-192 promotes nuclear translocation. Ser-199 is a minor phosphorylation site. Phosphorylation by CDK1 occurs at G2 and G2-M transition and leads to increased activity.

It is found in the nucleus. The catalysed reaction is O-phospho-L-tyrosyl-[protein] + H2O = L-tyrosyl-[protein] + phosphate. Its function is as follows. Functions as a dosage-dependent inducer in mitotic control. Tyrosine protein phosphatase required for progression of the cell cycle. When phosphorylated, highly effective in activating G2 cells into prophase. Directly dephosphorylates CDK1 and activates its kinase activity. This chain is M-phase inducer phosphatase 3 (CDC25C), found in Bos taurus (Bovine).